The sequence spans 247 residues: Ribose-5-phosphate isomerase (247 aa).

This sequence belongs to the ribose 5-phosphate isomerase family.

It localises to the cytoplasm. It catalyses the reaction aldehydo-D-ribose 5-phosphate = D-ribulose 5-phosphate. The protein operates within carbohydrate degradation; pentose phosphate pathway; D-ribose 5-phosphate from D-ribulose 5-phosphate (non-oxidative stage): step 1/1. In Meyerozyma guilliermondii (strain ATCC 6260 / CBS 566 / DSM 6381 / JCM 1539 / NBRC 10279 / NRRL Y-324) (Yeast), this protein is Ribose-5-phosphate isomerase (RKI1).